A 271-amino-acid chain; its full sequence is Phosphonates import ATP-binding protein PhnC 2 (271 aa).

Positions 2-245 (LTIDKLTKRF…VARDIYGAGA (244 aa)) constitute an ABC transporter domain. 34–41 (GRSGAGKS) is an ATP binding site.

It belongs to the ABC transporter superfamily. Phosphonates importer (TC 3.A.1.9.1) family. The complex is composed of two ATP-binding proteins (PhnC), two transmembrane proteins (PhnE) and a solute-binding protein (PhnD).

It is found in the cell inner membrane. It catalyses the reaction phosphonate(out) + ATP + H2O = phosphonate(in) + ADP + phosphate + H(+). Part of the ABC transporter complex PhnCDE involved in phosphonates import. Responsible for energy coupling to the transport system. This chain is Phosphonates import ATP-binding protein PhnC 2, found in Roseobacter denitrificans (strain ATCC 33942 / OCh 114) (Erythrobacter sp. (strain OCh 114)).